A 179-amino-acid chain; its full sequence is Large ribosomal subunit protein uL6 (179 aa).

The protein belongs to the universal ribosomal protein uL6 family. Part of the 50S ribosomal subunit.

In terms of biological role, this protein binds to the 23S rRNA, and is important in its secondary structure. It is located near the subunit interface in the base of the L7/L12 stalk, and near the tRNA binding site of the peptidyltransferase center. This chain is Large ribosomal subunit protein uL6, found in Chlorobium phaeobacteroides (strain BS1).